A 559-amino-acid chain; its full sequence is Aspartokinase 3, chloroplastic (559 aa).

A chloroplast-targeting transit peptide spans 1-85; that stretch reads MAASMQFYGV…LNKTEKKLTC (85 aa). The ATP site is built by K88, G91, and S120. Substrate is bound at residue E204. ACT domains follow at residues 402 to 480 and 481 to 559; these read ITST…SIIS and LIGN…AASS.

It belongs to the aspartokinase family. In terms of tissue distribution, highly expressed in xylem of leaves and hypocotyls, stele of roots and in trichomes after bolting. Weak expression in veins and mesophyll cells of caulone leaves, inflorescence stems, sepals, petals and stigmata.

It is found in the plastid. It localises to the chloroplast. It carries out the reaction L-aspartate + ATP = 4-phospho-L-aspartate + ADP. The protein operates within amino-acid biosynthesis; L-lysine biosynthesis via DAP pathway; (S)-tetrahydrodipicolinate from L-aspartate: step 1/4. It functions in the pathway amino-acid biosynthesis; L-methionine biosynthesis via de novo pathway; L-homoserine from L-aspartate: step 1/3. Its pathway is amino-acid biosynthesis; L-threonine biosynthesis; L-threonine from L-aspartate: step 1/5. Its activity is regulated as follows. Allosterically inhibited by lysine, but not by S-adenosyl-L-methionine (SAM). K(0.5) for lysine in the presence of physiological concentrations of substrates is 7.4 uM. No inhibition by threonine or leucine and no activation or inhibition by alanine, cysteine, isoleucine, serine, valine, methionine, glutamine, asparagine, glutamic acid or arginine. Involved in the first step of essential amino acids lysine, threonine, methionine and isoleucine synthesis via the aspartate-family pathway. The sequence is that of Aspartokinase 3, chloroplastic (AK3) from Arabidopsis thaliana (Mouse-ear cress).